The primary structure comprises 152 residues: Transcriptional regulator MraZ (152 aa).

SpoVT-AbrB domains follow at residues Ala5–Glu52 and Ala81–Met124.

It belongs to the MraZ family. Forms oligomers.

The protein localises to the cytoplasm. Its subcellular location is the nucleoid. This Psychromonas ingrahamii (strain DSM 17664 / CCUG 51855 / 37) protein is Transcriptional regulator MraZ.